The primary structure comprises 37 residues: Large ribosomal subunit protein bL36 (37 aa).

This sequence belongs to the bacterial ribosomal protein bL36 family.

The chain is Large ribosomal subunit protein bL36 from Aromatoleum aromaticum (strain DSM 19018 / LMG 30748 / EbN1) (Azoarcus sp. (strain EbN1)).